The chain runs to 189 residues: 3-hydroxyanthranilate 3,4-dioxygenase (189 aa).

Residue arginine 46 participates in O2 binding. Histidine 50, glutamate 56, and histidine 94 together coordinate Fe cation. Glutamate 56 provides a ligand contact to substrate. Substrate contacts are provided by arginine 98 and glutamate 109. 4 residues coordinate Fe cation: cysteine 124, cysteine 127, cysteine 161, and cysteine 164.

This sequence belongs to the 3-HAO family. In terms of assembly, homodimer. Fe(2+) serves as cofactor.

It catalyses the reaction 3-hydroxyanthranilate + O2 = (2Z,4Z)-2-amino-3-carboxymuconate 6-semialdehyde. Its pathway is cofactor biosynthesis; NAD(+) biosynthesis; quinolinate from L-kynurenine: step 3/3. Its function is as follows. Catalyzes the oxidative ring opening of 3-hydroxyanthranilate to 2-amino-3-carboxymuconate semialdehyde, which spontaneously cyclizes to quinolinate. This is 3-hydroxyanthranilate 3,4-dioxygenase from Shewanella woodyi (strain ATCC 51908 / MS32).